Reading from the N-terminus, the 471-residue chain is Siroheme synthase (471 aa).

Positions 1–203 are precorrin-2 dehydrogenase /sirohydrochlorin ferrochelatase; that stretch reads MDYLPLFADI…GDWESAEKTL (203 aa). Residues 22–23 and 43–44 each bind NAD(+); these read EV and KN. The residue at position 128 (serine 128) is a Phosphoserine. Residues 215-471 are uroporphyrinogen-III C-methyltransferase; the sequence is GEIILVGAGP…DTKSSLINLA (257 aa). Proline 224 contacts S-adenosyl-L-methionine. The active-site Proton acceptor is aspartate 247. The active-site Proton donor is lysine 269. S-adenosyl-L-methionine is bound by residues 300 to 302, isoleucine 305, 330 to 331, methionine 382, and alanine 411; these read GGD and TA.

This sequence in the N-terminal section; belongs to the precorrin-2 dehydrogenase / sirohydrochlorin ferrochelatase family. It in the C-terminal section; belongs to the precorrin methyltransferase family.

It catalyses the reaction uroporphyrinogen III + 2 S-adenosyl-L-methionine = precorrin-2 + 2 S-adenosyl-L-homocysteine + H(+). It carries out the reaction precorrin-2 + NAD(+) = sirohydrochlorin + NADH + 2 H(+). The catalysed reaction is siroheme + 2 H(+) = sirohydrochlorin + Fe(2+). Its pathway is cofactor biosynthesis; adenosylcobalamin biosynthesis; precorrin-2 from uroporphyrinogen III: step 1/1. It functions in the pathway cofactor biosynthesis; adenosylcobalamin biosynthesis; sirohydrochlorin from precorrin-2: step 1/1. The protein operates within porphyrin-containing compound metabolism; siroheme biosynthesis; precorrin-2 from uroporphyrinogen III: step 1/1. It participates in porphyrin-containing compound metabolism; siroheme biosynthesis; siroheme from sirohydrochlorin: step 1/1. Its pathway is porphyrin-containing compound metabolism; siroheme biosynthesis; sirohydrochlorin from precorrin-2: step 1/1. In terms of biological role, multifunctional enzyme that catalyzes the SAM-dependent methylations of uroporphyrinogen III at position C-2 and C-7 to form precorrin-2 via precorrin-1. Then it catalyzes the NAD-dependent ring dehydrogenation of precorrin-2 to yield sirohydrochlorin. Finally, it catalyzes the ferrochelation of sirohydrochlorin to yield siroheme. The sequence is that of Siroheme synthase from Zymomonas mobilis subsp. mobilis (strain ATCC 31821 / ZM4 / CP4).